A 468-amino-acid polypeptide reads, in one-letter code: Fibrinogen beta chain (468 aa).

Gln1 is subject to Pyrrolidone carboxylic acid. Over residues 1-10 (QFPTDYDEGQ) the composition is skewed to acidic residues. A disordered region spans residues 1–54 (QFPTDYDEGQDDRPKVGLGARGHRPYDKKKEEAPSLRPVPPPISGGGYRARPAT). The O-linked (GalNAc...) threonine glycan is linked to Thr4. Tyr6 bears the Sulfotyrosine mark. Residues 24–34 (RPYDKKKEEAP) are compositionally biased toward basic and acidic residues. Residues 88 to 204 (KLQDTLVRQE…TQMEYCRTPC (117 aa)) adopt a coiled-coil conformation. Intrachain disulfides connect Cys208/Cys293 and Cys218/Cys247. The region spanning 209–465 (NIPVVSGKEC…KMSMKIRPYF (257 aa)) is the Fibrinogen C-terminal domain. N-linked (GlcNAc...) asparagine glycosylation occurs at Asn371. A disulfide bond links Cys401 and Cys414.

As to quaternary structure, heterohexamer; disulfide linked. Contains 2 sets of 3 non-identical chains (alpha, beta and gamma). The 2 heterotrimers are in head to head conformation with the N-termini in a small central domain. In terms of processing, conversion of fibrinogen to fibrin is triggered by thrombin, which cleaves fibrinopeptides A and B from alpha and beta chains, and thus exposes the N-terminal polymerization sites responsible for the formation of the soft clot. The soft clot is converted into the hard clot by factor XIIIA which catalyzes the epsilon-(gamma-glutamyl)lysine cross-linking between gamma chains (stronger) and between alpha chains (weaker) of different monomers. Detected in blood plasma (at protein level).

The protein resides in the secreted. Functionally, cleaved by the protease thrombin to yield monomers which, together with fibrinogen alpha (FGA) and fibrinogen gamma (FGG), polymerize to form an insoluble fibrin matrix. Fibrin has a major function in hemostasis as one of the primary components of blood clots. In addition, functions during the early stages of wound repair to stabilize the lesion and guide cell migration during re-epithelialization. Was originally thought to be essential for platelet aggregation, based on in vitro studies using anticoagulated blood. However subsequent studies have shown that it is not absolutely required for thrombus formation in vivo. Enhances expression of SELP in activated platelets. Maternal fibrinogen is essential for successful pregnancy. Fibrin deposition is also associated with infection, where it protects against IFNG-mediated hemorrhage. May also facilitate the antibacterial immune response via both innate and T-cell mediated pathways. This is Fibrinogen beta chain (FGB) from Bos taurus (Bovine).